A 208-amino-acid chain; its full sequence is N-(5'-phosphoribosyl)anthranilate isomerase (208 aa).

This sequence belongs to the TrpF family.

It carries out the reaction N-(5-phospho-beta-D-ribosyl)anthranilate = 1-(2-carboxyphenylamino)-1-deoxy-D-ribulose 5-phosphate. The protein operates within amino-acid biosynthesis; L-tryptophan biosynthesis; L-tryptophan from chorismate: step 3/5. The chain is N-(5'-phosphoribosyl)anthranilate isomerase from Neisseria meningitidis serogroup B (strain ATCC BAA-335 / MC58).